We begin with the raw amino-acid sequence, 215 residues long: Cytochrome b6 (215 aa).

A helical membrane pass occupies residues 32-52 (IFHCLGGITLTCFLVQVATGF). Cys-35 contacts heme c. Heme b contacts are provided by His-86 and His-100. 3 consecutive transmembrane segments (helical) span residues 90–110 (ASMM…TGGF), 116–136 (LTWV…VTGY), and 186–206 (LHTF…FPMI). The heme b site is built by His-187 and His-202.

It belongs to the cytochrome b family. PetB subfamily. As to quaternary structure, the 4 large subunits of the cytochrome b6-f complex are cytochrome b6, subunit IV (17 kDa polypeptide, PetD), cytochrome f and the Rieske protein, while the 4 small subunits are PetG, PetL, PetM and PetN. The complex functions as a dimer. Heme b is required as a cofactor. The cofactor is heme c.

The protein localises to the plastid. The protein resides in the chloroplast thylakoid membrane. In terms of biological role, component of the cytochrome b6-f complex, which mediates electron transfer between photosystem II (PSII) and photosystem I (PSI), cyclic electron flow around PSI, and state transitions. The polypeptide is Cytochrome b6 (Calycanthus floridus var. glaucus (Eastern sweetshrub)).